Reading from the N-terminus, the 306-residue chain is Grixazone synthase (306 aa).

Positions 39, 58, 67, 222, 226, and 248 each coordinate Cu(2+).

Belongs to the tyrosinase family. Requires Cu(2+) as cofactor.

It carries out the reaction 2 3-amino-4-hydroxybenzoate + N-acetyl-L-cysteine + 2 O2 + H(+) = grixazone B + CO2 + 4 H2O. The catalysed reaction is 2 3-amino-4-hydroxybenzaldehyde + N-acetyl-L-cysteine + 2 O2 = grixazone A + formate + 3 H2O + H(+). The enzyme catalyses 4 2-aminophenol + 3 O2 = 2 2-aminophenoxazin-3-one + 6 H2O. Its activity is regulated as follows. Inhibited by 3-amino-4-hydroxybenzensulfonic acid, 4-hydroxy-3-nitrobenzaldehyde, L-tyrosine, p-hydroxybenzaldehyde. Activated by the copper chaperone GriE. Functionally, involved in the biosynthesis of the parasiticide antibiotic grixazone. Catalyzes the oxidation of 3-amino-4-hydroxybenzoate (3,4-AHBOA) to yield the corresponding quinone imine which is then non-enzymatically conjugated with the thiol group of N-acetylcysteine. The resultant compound is oxidized to its quinone imine enzymatically and is then dimerized non-enzymatically with another quinone imine oxidized by GriF to yield grixazone B. 3-amino-4-hydroxybenzaldehyde (3,4-AHBAL) can also be used as substrate to yield grixazone A. In the grixazone biosynthetic pathway, it can also function as an o-aminophenol oxidase that catalyzes the formation of the phenoxazinone chromophore from alpha-aminophenol. It can also use 2-amino-4-methylphenol, and to a lesser extent, 3,4-dihydroxybenzaldehyde, catechol and 3,4-dihydroxy-L-phenylalanine (L-DOPA) as substrates. In contrast to tyrosinases, it does not display monophenolase activity. In Streptomyces griseus subsp. griseus (strain JCM 4626 / CBS 651.72 / NBRC 13350 / KCC S-0626 / ISP 5235), this protein is Grixazone synthase.